The sequence spans 224 residues: uncharacterized protein (224 aa).

A signal peptide spans 1 to 17; sequence MFTILLYFLVLFWVTNA.

This is an uncharacterized protein from Caenorhabditis elegans.